The primary structure comprises 464 residues: tRNA modification GTPase MnmE (464 aa).

Residues Arg-23, Glu-84, and Arg-123 each coordinate (6S)-5-formyl-5,6,7,8-tetrahydrofolate. One can recognise a TrmE-type G domain in the interval 216–386; it reads GARATLVGRP…LGATVARLLL (171 aa). Position 226 (Asn-226) interacts with K(+). GTP-binding positions include 226–231, 245–251, and 270–273; these read NAGKSS, TPIPGTT, and DTAG. Mg(2+) is bound at residue Ser-230. The K(+) site is built by Thr-245, Ile-247, and Thr-250. Thr-251 is a Mg(2+) binding site. Residue Lys-464 participates in (6S)-5-formyl-5,6,7,8-tetrahydrofolate binding.

It belongs to the TRAFAC class TrmE-Era-EngA-EngB-Septin-like GTPase superfamily. TrmE GTPase family. In terms of assembly, homodimer. Heterotetramer of two MnmE and two MnmG subunits. K(+) is required as a cofactor.

Its subcellular location is the cytoplasm. Exhibits a very high intrinsic GTPase hydrolysis rate. Involved in the addition of a carboxymethylaminomethyl (cmnm) group at the wobble position (U34) of certain tRNAs, forming tRNA-cmnm(5)s(2)U34. In Roseiflexus castenholzii (strain DSM 13941 / HLO8), this protein is tRNA modification GTPase MnmE.